Here is an 82-residue protein sequence, read N- to C-terminus: Sec-independent protein translocase protein TatA (82 aa).

Residues 1–21 form a helical membrane-spanning segment; that stretch reads MGIFDWKHWIVILIVVVLVFG. The tract at residues 43–82 is disordered; the sequence is VNTEEDDKKEQPAAQPAQPLNQPHTIDAQAQKVEEPARKD.

It belongs to the TatA/E family. In terms of assembly, the Tat system comprises two distinct complexes: a TatABC complex, containing multiple copies of TatA, TatB and TatC subunits, and a separate TatA complex, containing only TatA subunits. Substrates initially bind to the TatABC complex, which probably triggers association of the separate TatA complex to form the active translocon.

The protein resides in the cell inner membrane. In terms of biological role, part of the twin-arginine translocation (Tat) system that transports large folded proteins containing a characteristic twin-arginine motif in their signal peptide across membranes. TatA could form the protein-conducting channel of the Tat system. The protein is Sec-independent protein translocase protein TatA of Pseudomonas paraeruginosa (strain DSM 24068 / PA7) (Pseudomonas aeruginosa (strain PA7)).